A 367-amino-acid chain; its full sequence is Dihydroorotate dehydrogenase (quinone) (367 aa).

FMN-binding positions include 61–65 (AGFDK) and Thr85. Residue Lys65 participates in substrate binding. 110–114 (NRMGF) is a binding site for substrate. The FMN site is built by Asn138 and Asn169. Asn169 contributes to the substrate binding site. The Nucleophile role is filled by Ser172. Substrate is bound at residue Asn174. FMN is bound by residues Lys212 and Thr240. 241 to 242 (NT) lines the substrate pocket. FMN contacts are provided by residues Gly263, Gly292, and 313-314 (YS).

The protein belongs to the dihydroorotate dehydrogenase family. Type 2 subfamily. Monomer. The cofactor is FMN.

Its subcellular location is the cell membrane. The catalysed reaction is (S)-dihydroorotate + a quinone = orotate + a quinol. The protein operates within pyrimidine metabolism; UMP biosynthesis via de novo pathway; orotate from (S)-dihydroorotate (quinone route): step 1/1. Catalyzes the conversion of dihydroorotate to orotate with quinone as electron acceptor. This chain is Dihydroorotate dehydrogenase (quinone), found in Rhodospirillum rubrum (strain ATCC 11170 / ATH 1.1.1 / DSM 467 / LMG 4362 / NCIMB 8255 / S1).